The sequence spans 435 residues: MAATRCWRFVLRSPGLSLHTAAEATVTAPEVTGSDVKAAPVARYPPIVASLTADSKAARQRRVERWQATVHAAKSVDEKLRILTKMQFMKYVVYPQTFALNADRWYQSFTKTVFLSGLPPPQAQPDREPAQVVDLAALRAAVCDCLLQEHFFLRRKKRAPIYQERYAVASPFLDQLVPSLTGLLSAYNPVLAAAALDCNRPVHFYWLRGEEIIPGGHRKGRVDAVRYQINDKPHNQIRISRQLPEFVPLDYSVPVEVPVKNCKPDKLPLFKRQYENAIFIGTKTADPLCYGHTQFHLLPDKLKRERLLKQNCADQIEVIFRANAIASLFAWTGAQAMYQGFWSEADVTRPFVSQGVITDGKYFSFFCYQLNTLALTAQADQNNPRKNICWGTQSMPLYETIEDNDVKGFNDDVLLQLVHFLLNRPEEDKAQLLVN.

The protein belongs to the mitochondrion-specific ribosomal protein mL65 family. Component of the mitochondrial ribosome small subunit (28S) which comprises a 12S rRNA and about 30 distinct proteins.

It localises to the mitochondrion. The protein is Large ribosomal subunit protein mL65 (MRPS30) of Bos taurus (Bovine).